The primary structure comprises 378 residues: Homoserine O-acetyltransferase (378 aa).

The region spanning 52 to 337 is the AB hydrolase-1 domain; the sequence is NAILICHALT…YSQHGHDTFL (286 aa). Ser148 acts as the Nucleophile in catalysis. Arg217 contacts substrate. Active-site residues include Asp304 and His333. Asp334 is a binding site for substrate.

It belongs to the AB hydrolase superfamily. MetX family. As to quaternary structure, homodimer.

The protein localises to the cytoplasm. It carries out the reaction L-homoserine + acetyl-CoA = O-acetyl-L-homoserine + CoA. It functions in the pathway amino-acid biosynthesis; L-methionine biosynthesis via de novo pathway; O-acetyl-L-homoserine from L-homoserine: step 1/1. Its function is as follows. Transfers an acetyl group from acetyl-CoA to L-homoserine, forming acetyl-L-homoserine. This chain is Homoserine O-acetyltransferase, found in Chloroherpeton thalassium (strain ATCC 35110 / GB-78).